A 65-amino-acid chain; its full sequence is uncharacterized protein (65 aa).

2 helical membrane passes run 4–24 and 39–59; these read AWLF…DKVL and LPIP…FIVF.

It localises to the membrane. This is an uncharacterized protein from Streptococcus pneumoniae serotype 2 (strain D39 / NCTC 7466).